A 183-amino-acid polypeptide reads, in one-letter code: Ribosomal RNA small subunit methyltransferase G (183 aa).

S-adenosyl-L-methionine-binding positions include glycine 60, phenylalanine 65, 111–112 (IE), and arginine 125.

Belongs to the methyltransferase superfamily. RNA methyltransferase RsmG family.

Its subcellular location is the cytoplasm. It catalyses the reaction guanosine(527) in 16S rRNA + S-adenosyl-L-methionine = N(7)-methylguanosine(527) in 16S rRNA + S-adenosyl-L-homocysteine. Functionally, specifically methylates the N7 position of guanine in position 527 of 16S rRNA. The polypeptide is Ribosomal RNA small subunit methyltransferase G (Campylobacter hominis (strain ATCC BAA-381 / DSM 21671 / CCUG 45161 / LMG 19568 / NCTC 13146 / CH001A)).